Reading from the N-terminus, the 388-residue chain is Succinate--CoA ligase [ADP-forming] subunit beta (388 aa).

Residues 9–244 (KEILRKFGVA…LDEEDPAEIE (236 aa)) form the ATP-grasp domain. Residues Lys46, 53 to 55 (GRG), Glu99, Ala102, and Glu107 each bind ATP. Mg(2+) is bound by residues Asn199 and Asp213. Substrate is bound by residues Asn264 and 321-323 (GIM).

Belongs to the succinate/malate CoA ligase beta subunit family. In terms of assembly, heterotetramer of two alpha and two beta subunits. Requires Mg(2+) as cofactor.

The enzyme catalyses succinate + ATP + CoA = succinyl-CoA + ADP + phosphate. It catalyses the reaction GTP + succinate + CoA = succinyl-CoA + GDP + phosphate. Its pathway is carbohydrate metabolism; tricarboxylic acid cycle; succinate from succinyl-CoA (ligase route): step 1/1. Functionally, succinyl-CoA synthetase functions in the citric acid cycle (TCA), coupling the hydrolysis of succinyl-CoA to the synthesis of either ATP or GTP and thus represents the only step of substrate-level phosphorylation in the TCA. The beta subunit provides nucleotide specificity of the enzyme and binds the substrate succinate, while the binding sites for coenzyme A and phosphate are found in the alpha subunit. In Burkholderia cenocepacia (strain ATCC BAA-245 / DSM 16553 / LMG 16656 / NCTC 13227 / J2315 / CF5610) (Burkholderia cepacia (strain J2315)), this protein is Succinate--CoA ligase [ADP-forming] subunit beta.